Consider the following 160-residue polypeptide: MVPKLFTSQICLLLLLGLMGVEGSLHAKPGQFTWAQWFEIQHINMTSGQCTNAMQVINNYQRRCKNQNTFLLTTFADVVHVCGNPSMPCPSNTSLNNCHHSGVQVPLIHCNLTTPSRRISNCRYTQTTANKYYIVACNNSDPVRDPPQYPVVPVHLDRII.

The signal sequence occupies residues 1-27 (MVPKLFTSQICLLLLLGLMGVEGSLHA). Tryptophan 34 carries C-linked (Man) tryptophan glycosylation. Histidine 42 functions as the Proton acceptor in the catalytic mechanism. Asparagine 44 carries N-linked (GlcNAc...) asparagine glycosylation. 4 cysteine pairs are disulfide-bonded: cysteine 50-cysteine 110, cysteine 64-cysteine 122, cysteine 82-cysteine 137, and cysteine 89-cysteine 98. A 3'-nitrotyrosine modification is found at tyrosine 60. Position 65–69 (65–69 (KNQNT)) interacts with substrate. N-linked (GlcNAc...) asparagine glycosylation is found at asparagine 92, asparagine 111, and asparagine 138. Histidine 155 (proton donor) is an active-site residue.

This sequence belongs to the pancreatic ribonuclease family. As to quaternary structure, interacts with and forms a tight 1:1 complex with RNH1. Dimerization of two such complexes may occur.

The protein localises to the lysosome. It is found in the cytoplasmic granule. The catalysed reaction is an [RNA] containing cytidine + H2O = an [RNA]-3'-cytidine-3'-phosphate + a 5'-hydroxy-ribonucleotide-3'-[RNA].. The enzyme catalyses an [RNA] containing uridine + H2O = an [RNA]-3'-uridine-3'-phosphate + a 5'-hydroxy-ribonucleotide-3'-[RNA].. This is a non-secretory ribonuclease. It is a pyrimidine specific nuclease with a slight preference for U. Cytotoxin and helminthotoxin. Possesses a wide variety of biological activities. This chain is Non-secretory ribonuclease (RNASE2), found in Macaca fascicularis (Crab-eating macaque).